Here is a 118-residue protein sequence, read N- to C-terminus: Large ribosomal subunit protein bL19 (118 aa).

The protein belongs to the bacterial ribosomal protein bL19 family.

In terms of biological role, this protein is located at the 30S-50S ribosomal subunit interface and may play a role in the structure and function of the aminoacyl-tRNA binding site. In Saccharophagus degradans (strain 2-40 / ATCC 43961 / DSM 17024), this protein is Large ribosomal subunit protein bL19.